The sequence spans 360 residues: Peptide chain release factor 1 (360 aa).

Residue Gln235 is modified to N5-methylglutamine. The segment covering 284–293 (QKRQQEEAST) has biased composition (basic and acidic residues). Residues 284–305 (QKRQQEEASTRRNLLGSGDRSD) are disordered.

It belongs to the prokaryotic/mitochondrial release factor family. In terms of processing, methylated by PrmC. Methylation increases the termination efficiency of RF1.

The protein resides in the cytoplasm. Its function is as follows. Peptide chain release factor 1 directs the termination of translation in response to the peptide chain termination codons UAG and UAA. In Pectobacterium carotovorum subsp. carotovorum (strain PC1), this protein is Peptide chain release factor 1.